Consider the following 506-residue polypeptide: Xaa-Pro aminopeptidase 3 (506 aa).

The N-terminal 31 residues, M1 to Y31, are a transit peptide targeting the mitochondrion. Positions H54 to L79 are interaction with TNFRSF1B. Substrate-binding residues include Y300, D331, D342, H423, H430, E450, and E474. D331, D342, and H423 together coordinate Mn(2+). Residues E450 and E474 each coordinate Mn(2+).

The protein belongs to the peptidase M24B family. Homodimer. Interacts with TNFRSF1B/TNFR2 (activated) and TRAF2. Mn(2+) is required as a cofactor. Expressed in brain, kidney, heart, liver, skeletal muscle and testis.

The protein resides in the mitochondrion. It is found in the cytoplasm. It carries out the reaction Release of any N-terminal amino acid, including proline, that is linked to proline, even from a dipeptide or tripeptide.. Catalyzes the removal of a penultimate prolyl residue from the N-termini of peptides, such as Leu-Pro-Ala. Also shows low activity towards peptides with Ala or Ser at the P1 position. Promotes TNFRSF1B-mediated phosphorylation of MAPK8/JNK1 and MAPK9/JNK2, suggesting a function as an adapter protein for TNFRSF1B; the effect is independent of XPNPEP3 peptidase activity. May inhibit apoptotic cell death induced via TNF-TNFRSF1B signaling. The sequence is that of Xaa-Pro aminopeptidase 3 (Xpnpep3) from Mus musculus (Mouse).